The chain runs to 199 residues: 3-isopropylmalate dehydratase small subunit (199 aa).

The protein belongs to the LeuD family. LeuD type 1 subfamily. As to quaternary structure, heterodimer of LeuC and LeuD.

It carries out the reaction (2R,3S)-3-isopropylmalate = (2S)-2-isopropylmalate. Its pathway is amino-acid biosynthesis; L-leucine biosynthesis; L-leucine from 3-methyl-2-oxobutanoate: step 2/4. Catalyzes the isomerization between 2-isopropylmalate and 3-isopropylmalate, via the formation of 2-isopropylmaleate. This chain is 3-isopropylmalate dehydratase small subunit, found in Kocuria rhizophila (strain ATCC 9341 / DSM 348 / NBRC 103217 / DC2201).